The following is a 201-amino-acid chain: FMN-dependent NADH:quinone oxidoreductase (201 aa).

Residues S10, 16-18 (SQS), 96-99 (MYNF), and 140-143 (SRGG) contribute to the FMN site.

This sequence belongs to the azoreductase type 1 family. In terms of assembly, homodimer. It depends on FMN as a cofactor.

The enzyme catalyses 2 a quinone + NADH + H(+) = 2 a 1,4-benzosemiquinone + NAD(+). The catalysed reaction is N,N-dimethyl-1,4-phenylenediamine + anthranilate + 2 NAD(+) = 2-(4-dimethylaminophenyl)diazenylbenzoate + 2 NADH + 2 H(+). Functionally, quinone reductase that provides resistance to thiol-specific stress caused by electrophilic quinones. In terms of biological role, also exhibits azoreductase activity. Catalyzes the reductive cleavage of the azo bond in aromatic azo compounds to the corresponding amines. The protein is FMN-dependent NADH:quinone oxidoreductase of Escherichia coli O9:H4 (strain HS).